A 299-amino-acid chain; its full sequence is F-actin-capping protein subunit alpha-3 (299 aa).

Phosphoserine occurs at positions 2 and 290.

It belongs to the F-actin-capping protein alpha subunit family. As to quaternary structure, component of the F-actin capping complex, composed of a heterodimer of an alpha and a beta subunit. Component of the WASH complex, composed of F-actin-capping protein subunit alpha (CAPZA1, CAPZA2 or CAPZA3), F-actin-capping protein subunit beta (CAPZB), WASHC1, WASHC2, WASHC3, WASHC4 and WASHC5. As to expression, exclusively expressed in the testis.

It localises to the cytoplasm. Its subcellular location is the cytoskeleton. Its function is as follows. F-actin-capping proteins bind in a Ca(2+)-independent manner to the fast growing ends of actin filaments (barbed end) thereby blocking the exchange of subunits at these ends. Unlike other capping proteins (such as gelsolin and severin), these proteins do not sever actin filaments. May play a role in the morphogenesis of spermatid. The protein is F-actin-capping protein subunit alpha-3 (Capza3) of Rattus norvegicus (Rat).